The following is a 206-amino-acid chain: Putative 3-methyladenine DNA glycosylase (206 aa).

It belongs to the DNA glycosylase MPG family.

The chain is Putative 3-methyladenine DNA glycosylase from Staphylococcus carnosus (strain TM300).